Reading from the N-terminus, the 414-residue chain is MTRHDAQLYELKKKIEELKKIRGRGTELISLYIPAGYDLSKVMQQLREEYSTAQNIKSKTTRKNVLGALERAMQHLKLYKQTPENGLALFVGNVSEMEGNTDIRLWAIVPPEPLNVRLYRCDQTFVTEPLEEMLRVKDAYGLITVEKNEATIGLLRGKRIEVLDELTSNVPGKTRAGGQSARRYERIREQETHEFMKRIGEHANRVFLPLLEKGELKGIIVGGPGPTKEDFVEGDYLHHELKKKIIGVVDISYHGEYGLRELVEKASDILRDHEVIREKKLVNEFLKHVVKDTGLATYGEREVRRALEIGAVDTLLISEGYDKVRVRAKCNHCGWEELKTMSEEEFEVYKKKLTRCPKCGSQNLTIEKWDVAEELIKMAEEAGSDVEIISLDTEEGQQFYRAFGGLGAILRFKI.

The protein belongs to the eukaryotic release factor 1 family. As to quaternary structure, heterodimer of two subunits, one of which binds GTP.

The protein localises to the cytoplasm. In terms of biological role, directs the termination of nascent peptide synthesis (translation) in response to the termination codons UAA, UAG and UGA. This Pyrococcus abyssi (strain GE5 / Orsay) protein is Peptide chain release factor subunit 1 (prf1).